The sequence spans 458 residues: Adenylosuccinate synthetase (458 aa).

GTP is bound by residues 17–23 (GDEGKGK) and 45–47 (GHT). Residue Asp-18 is the Proton acceptor of the active site. Residues Asp-18 and Gly-45 each coordinate Mg(2+). IMP contacts are provided by residues 18–21 (DEGK), 43–46 (NAGH), Thr-137, Arg-151, Gln-247, Thr-262, and Arg-330. His-46 serves as the catalytic Proton donor. Residue 326-332 (VTTGRSR) coordinates substrate. GTP contacts are provided by residues Arg-332, 358–360 (KLD), and 440–442 (STS).

It belongs to the adenylosuccinate synthetase family. As to quaternary structure, homodimer. Mg(2+) is required as a cofactor.

It localises to the cytoplasm. The catalysed reaction is IMP + L-aspartate + GTP = N(6)-(1,2-dicarboxyethyl)-AMP + GDP + phosphate + 2 H(+). The protein operates within purine metabolism; AMP biosynthesis via de novo pathway; AMP from IMP: step 1/2. Plays an important role in the de novo pathway of purine nucleotide biosynthesis. Catalyzes the first committed step in the biosynthesis of AMP from IMP. This Acidovorax ebreus (strain TPSY) (Diaphorobacter sp. (strain TPSY)) protein is Adenylosuccinate synthetase.